A 497-amino-acid polypeptide reads, in one-letter code: Lysophospholipid acyltransferase 5 (497 aa).

Helical transmembrane passes span 31 to 51, 74 to 94, 100 to 120, 173 to 193, 213 to 235, and 264 to 286; these read LLTILAGYPVAALYQKFISVI, GLDTYHSLIAILTTYFLVLLL, IFLAINFVFHMSYLLLGYFYT, LELLAFSYFPSGFLVGPQFPF, AGVRRFGAGAFYLIVCQVGLRYL, and SLYKYISCWLLTEGALICIGLTY. Active-site residues include Asn-322 and His-358. A helical membrane pass occupies residues 339–361; sequence FLNNRTISYGAALGFLAVWHGYH. Residue Asn-398 is glycosylated (N-linked (GlcNAc...) asparagine). 2 helical membrane passes run 408-428 and 435-455; these read FITLKSYNVVYMGWCLTAFVF and IVVYGAVSYYGFTFLVLWAAF. The segment at 469–497 is disordered; the sequence is KLAGEDQKLQDSNTDKLVEEKKPEDKKSE. A compositionally biased stretch (basic and acidic residues) spans 470-497; the sequence is LAGEDQKLQDSNTDKLVEEKKPEDKKSE. Ser-480 is modified (phosphoserine).

The protein belongs to the membrane-bound acyltransferase family. In terms of tissue distribution, during gastrulation, expressed mainly along the midline in the presumptive mesoderm. During germ band elongation, expressed in mesoderm and endoderm primordia and in the cephalic furrow. Expression in mesoderm and endoderm lineages continues during germ band shortening. At the end of this process, no longer detected in somatic mesoderm or endoderm layer with expression restricted to anterior and posterior domains of the visceral mesoderm.

It is found in the endoplasmic reticulum. The protein localises to the membrane. The catalysed reaction is a 1-acyl-sn-glycero-3-phospho-L-serine + an acyl-CoA = a 1,2-diacyl-sn-glycero-3-phospho-L-serine + CoA. It catalyses the reaction 1-(9Z-octadecenoyl)-sn-glycero-3-phospho-L-serine + (9Z)-hexadecenoyl-CoA = 1-(9Z-octadecenoyl)-2-(9Z-hexadecenoyl)-sn-glycero-3-phospho-L-serine + CoA. The enzyme catalyses a 1-acyl-sn-glycero-3-phosphocholine + an acyl-CoA = a 1,2-diacyl-sn-glycero-3-phosphocholine + CoA. It carries out the reaction 1-hexadecanoyl-sn-glycero-3-phosphocholine + (9Z)-octadecenoyl-CoA = 1-hexadecanoyl-2-(9Z-octadecenoyl)-sn-glycero-3-phosphocholine + CoA. The catalysed reaction is (9Z,12Z)-octadecadienoyl-CoA + 1-hexadecanoyl-sn-glycero-3-phosphocholine = 1-hexadecanoyl-2-(9Z,12Z-octadecadienoyl)-sn-glycero-3-phosphocholine + CoA. It catalyses the reaction (5Z,8Z,11Z,14Z)-eicosatetraenoyl-CoA + 1-hexadecanoyl-sn-glycero-3-phosphocholine = 1-hexadecanoyl-2-(5Z,8Z,11Z,14Z-eicosatetraenoyl)-sn-glycero-3-phosphocholine + CoA. The enzyme catalyses (9Z)-hexadecenoyl-CoA + 1-hexadecanoyl-sn-glycero-3-phosphocholine = 1-hexadecanoyl-2-(9Z-hexadecenoyl)-sn-glycero-3-phosphocholine + CoA. It functions in the pathway lipid metabolism; phospholipid metabolism. Acyltransferase that mediates the acylation of lysophospholipids to produce phospholipids (glycerophospholipids). Highest activity with lysophosphatidylcholine (1-acyl-sn-glycero-3-phosphocholine or LPC) producing phosphatidylcholine (1,2-diacyl-sn-glycero-3-phosphocholine or PC) (LPCAT activity), but also converts lysophosphatidylserine (1-acyl-2-hydroxy-sn-glycero-3-phospho-L-serine or LPS) to phosphatidylserine (1,2-diacyl-sn-glycero-3-phospho-L-serine or PS) (LPSAT activity). Has a preference for unsaturated fatty acids of at least 16 carbons such as oleoyl-CoA ((9Z)-octadecenoyl-CoA) and palmitoleoyl-CoA ((9Z)-hexadecenoyl-CoA). Glycerophospholipids are important structural and functional components of cellular membrane, acyl-chain remodeling regulates the molecular species distribution of glycerophospholipids which can affect membrane fluidity and curvature. Essential for fertility and viability together with Oysgedart (Oys). Required for germ cells to migrate into the mesoderm. The sequence is that of Lysophospholipid acyltransferase 5 from Drosophila melanogaster (Fruit fly).